The following is a 121-amino-acid chain: uncharacterized protein (121 aa).

The interval 101 to 121 (SIEPTATGSPETRDPDPSAYA) is disordered. Positions 111–121 (ETRDPDPSAYA) are enriched in basic and acidic residues.

Its subcellular location is the mitochondrion. This is an uncharacterized protein from Arabidopsis thaliana (Mouse-ear cress).